The sequence spans 265 residues: 5'-nucleotidase SurE (265 aa).

A divalent metal cation contacts are provided by Asp-8, Asp-9, Ser-40, and Asn-98.

This sequence belongs to the SurE nucleotidase family. The cofactor is a divalent metal cation.

The protein localises to the cytoplasm. The enzyme catalyses a ribonucleoside 5'-phosphate + H2O = a ribonucleoside + phosphate. Functionally, nucleotidase that shows phosphatase activity on nucleoside 5'-monophosphates. This chain is 5'-nucleotidase SurE, found in Trichormus variabilis (strain ATCC 29413 / PCC 7937) (Anabaena variabilis).